Consider the following 253-residue polypeptide: Tryptophan synthase alpha chain (253 aa).

Catalysis depends on proton acceptor residues E46 and D57.

It belongs to the TrpA family. In terms of assembly, tetramer of two alpha and two beta chains.

The enzyme catalyses (1S,2R)-1-C-(indol-3-yl)glycerol 3-phosphate + L-serine = D-glyceraldehyde 3-phosphate + L-tryptophan + H2O. Its pathway is amino-acid biosynthesis; L-tryptophan biosynthesis; L-tryptophan from chorismate: step 5/5. In terms of biological role, the alpha subunit is responsible for the aldol cleavage of indoleglycerol phosphate to indole and glyceraldehyde 3-phosphate. This is Tryptophan synthase alpha chain from Dictyoglomus turgidum (strain DSM 6724 / Z-1310).